The primary structure comprises 145 residues: D-aminoacyl-tRNA deacylase (145 aa).

Residues 137–138 (GP) carry the Gly-cisPro motif, important for rejection of L-amino acids motif.

The protein belongs to the DTD family. As to quaternary structure, homodimer.

It localises to the cytoplasm. The catalysed reaction is glycyl-tRNA(Ala) + H2O = tRNA(Ala) + glycine + H(+). It catalyses the reaction a D-aminoacyl-tRNA + H2O = a tRNA + a D-alpha-amino acid + H(+). An aminoacyl-tRNA editing enzyme that deacylates mischarged D-aminoacyl-tRNAs. Also deacylates mischarged glycyl-tRNA(Ala), protecting cells against glycine mischarging by AlaRS. Acts via tRNA-based rather than protein-based catalysis; rejects L-amino acids rather than detecting D-amino acids in the active site. By recycling D-aminoacyl-tRNA to D-amino acids and free tRNA molecules, this enzyme counteracts the toxicity associated with the formation of D-aminoacyl-tRNA entities in vivo and helps enforce protein L-homochirality. The chain is D-aminoacyl-tRNA deacylase from Pseudomonas syringae pv. tomato (strain ATCC BAA-871 / DC3000).